We begin with the raw amino-acid sequence, 354 residues long: tRNA N6-adenosine threonylcarbamoyltransferase (354 aa).

Fe cation contacts are provided by His115 and His119. Substrate is bound by residues 138 to 142, Asp171, Gly184, and Asn276; that span reads LVSGG. Residue Asp304 coordinates Fe cation.

It belongs to the KAE1 / TsaD family. Fe(2+) serves as cofactor.

Its subcellular location is the cytoplasm. The enzyme catalyses L-threonylcarbamoyladenylate + adenosine(37) in tRNA = N(6)-L-threonylcarbamoyladenosine(37) in tRNA + AMP + H(+). Required for the formation of a threonylcarbamoyl group on adenosine at position 37 (t(6)A37) in tRNAs that read codons beginning with adenine. Is involved in the transfer of the threonylcarbamoyl moiety of threonylcarbamoyl-AMP (TC-AMP) to the N6 group of A37, together with TsaE and TsaB. TsaD likely plays a direct catalytic role in this reaction. In Xanthomonas campestris pv. campestris (strain 8004), this protein is tRNA N6-adenosine threonylcarbamoyltransferase.